Reading from the N-terminus, the 1589-residue chain is Mediator of RNA polymerase II transcription subunit 23 (1589 aa).

A disordered region spans residues 1381 to 1499 (YVSQNEPAPP…PPTPAPMHHQ (119 aa)). Residues 1392–1410 (TPEREKTPERKDQQKEQQE) show a composition bias toward basic and acidic residues. Over residues 1457–1470 (LHHQQQQQQHLSQM) the composition is skewed to low complexity.

This sequence belongs to the Mediator complex subunit 23 family. Component of the Mediator complex.

It localises to the nucleus. In terms of biological role, component of the Mediator complex, a coactivator involved in the regulated transcription of nearly all RNA polymerase II-dependent genes. Mediator functions as a bridge to convey information from gene-specific regulatory proteins to the basal RNA polymerase II transcription machinery. Mediator is recruited to promoters by direct interactions with regulatory proteins and serves as a scaffold for the assembly of a functional preinitiation complex with RNA polymerase II and the general transcription factors. This Caenorhabditis briggsae protein is Mediator of RNA polymerase II transcription subunit 23 (sur-2).